The following is a 628-amino-acid chain: Phosphomethylpyrimidine synthase (628 aa).

Substrate is bound by residues asparagine 229, methionine 258, tyrosine 287, histidine 323, 343–345 (SRG), 384–387 (DGLR), and glutamate 423. Residue histidine 427 coordinates Zn(2+). Tyrosine 450 serves as a coordination point for substrate. Histidine 491 lines the Zn(2+) pocket. Residues cysteine 571, cysteine 574, and cysteine 579 each coordinate [4Fe-4S] cluster.

The protein belongs to the ThiC family. As to quaternary structure, homodimer. It depends on [4Fe-4S] cluster as a cofactor.

The catalysed reaction is 5-amino-1-(5-phospho-beta-D-ribosyl)imidazole + S-adenosyl-L-methionine = 4-amino-2-methyl-5-(phosphooxymethyl)pyrimidine + CO + 5'-deoxyadenosine + formate + L-methionine + 3 H(+). It participates in cofactor biosynthesis; thiamine diphosphate biosynthesis. Catalyzes the synthesis of the hydroxymethylpyrimidine phosphate (HMP-P) moiety of thiamine from aminoimidazole ribotide (AIR) in a radical S-adenosyl-L-methionine (SAM)-dependent reaction. The sequence is that of Phosphomethylpyrimidine synthase from Variovorax paradoxus (strain S110).